We begin with the raw amino-acid sequence, 522 residues long: Ankyrin repeat and death domain-containing protein 1A (522 aa).

11 ANK repeats span residues 14-43 (PLERQLHEAARQNNVGRMQELIGRRVNTRA), 47-76 (VGRVALHWAAGAGHEQAVRLLLEHEAAVDE), 90-119 (FGMNALLLSAWFGHLRILQILVNSGAKIHC), 123-152 (DGLTLLHCAAQKGHVPVLAFIMEDLEDVAL), 158-187 (LGRTAFHRAAEHGQLDALDFLVGSGCDHNV), 191-220 (EGNTALHLAAGRGHMAVLQRLVDIGLDLEE), 224-253 (EGLTALHSAAGGSHPDCVQLLLRAGSTVNA), 257-286 (KNLSCLHYAALSGSEDVSRVLIHAGGCANV), 290-319 (QGASPLHLAVRHNFPALVRLLINSDSDVNA), 323-352 (RQQTPLHLAAEHAWQDIADMLLIAGVDLNL), and 356-385 (QGKTALAVAVRSNHVSLVDMIIKADRFYRW). One can recognise a Death domain in the interval 413 to 501 (SVLWRLASRY…DLAGWSTMAR (89 aa)).

This Homo sapiens (Human) protein is Ankyrin repeat and death domain-containing protein 1A (ANKDD1A).